The primary structure comprises 238 residues: uncharacterized protein (238 aa).

This is an uncharacterized protein from Methanocaldococcus jannaschii (strain ATCC 43067 / DSM 2661 / JAL-1 / JCM 10045 / NBRC 100440) (Methanococcus jannaschii).